A 206-amino-acid chain; its full sequence is Sclerostin domain-containing protein 1 (206 aa).

The N-terminal stretch at 1-23 is a signal peptide; that stretch reads MLPPAIHLSLIPLLCILMKNCLA. The disordered stretch occupies residues 42–62; sequence AHPSSNSTLNQARNGGRHFSS. Over residues 43 to 62 the composition is skewed to polar residues; it reads HPSSNSTLNQARNGGRHFSS. Residue Asn-47 is glycosylated (N-linked (GlcNAc...) asparagine). 4 cysteine pairs are disulfide-bonded: Cys-75–Cys-133, Cys-89–Cys-147, Cys-100–Cys-163, and Cys-104–Cys-165. The 96-residue stretch at 75–170 folds into the CTCK domain; that stretch reads CRELRSTKYI…TACKCKRYTR (96 aa). N-linked (GlcNAc...) asparagine glycosylation is present at Asn-173. Positions 176 to 206 are disordered; it reads SHNFESVSPAKPAQHHRERKRASKSSKHSLS. Positions 188–206 are enriched in basic residues; sequence AQHHRERKRASKSSKHSLS.

The protein belongs to the sclerostin family. Interacts with BMP2, BMP4, BMP6 and BMP7 with high affinity. Highly expressed within the maximally sensitized/receptive endometrium. Weakly expressed in brain, kidney and the female reproductive tract. Expressed in the dermal papilla (DP) and at high level in the precortex of both anagen vibrissae and pelage follicles. Dynymic expression during the hair cycle.

It localises to the secreted. Functionally, directly antagonizes activity of BMP2, BMP4, BMP6 and BMP7 in a dose-dependent manner. May be involved in the onset of endometrial receptivity for implantation/sensitization for the decidual cell reaction. Enhances Wnt signaling and inhibits TGF-beta signaling. The chain is Sclerostin domain-containing protein 1 (Sostdc1) from Rattus norvegicus (Rat).